The primary structure comprises 265 residues: Pre-protein VI (265 aa).

Residues 1–33 constitute a propeptide that is removed on maturation; sequence MEDINFSSLAPRHGTRPYMGTWNEIGTSQLNGG. Residues 34–54 form an amphipathic alpha-helix essential for membrane lytic activity region; sequence AFNWNSIWSGLKNFGSTIKTY. An involved in endosomal membrane lysis region spans residues 36-53; that stretch reads NWNSIWSGLKNFGSTIKT. An interaction with hexon protein region spans residues 48–74; sequence GSTIKTYGTKAWNSQTGQMLRDKLKDQ. The Nuclear export signal motif lies at 67–76; that stretch reads LRDKLKDQNF. Residues 123–155 are disordered; it reads LETVPGSVPTKGEKRPRPDAEETLVTHTTEPPS. Basic and acidic residues predominate over residues 133–142; that stretch reads KGEKRPRPDA. Residues 136–140 carry the Nuclear localization signal motif; the sequence is KRPRP. A Phosphothreonine; by host modification is found at Thr-148. A PPXY motif motif is present at residues 153–156; the sequence is PPSY. A Nuclear export signal motif is present at residues 246–257; sequence STLNSIVGLGVK. The tract at residues 248 to 254 is interaction with hexon protein; it reads LNSIVGL. The segment at 255–265 is binds to importin alpha/beta, involved in hexon nuclear import; sequence GVKSLKRRRCY. Positions 260–263 match the Nuclear localization signal motif; sequence KRRR.

Belongs to the adenoviridae protein VI family. Interacts with hexon protein; this interaction allows nuclear import of hexon trimers and possibly pre-capsid assembly. Interacts (via C-terminal NLS) with importin alpha/beta. In terms of assembly, interacts (via PPxY motif) with host NEDD4 ubiquitine ligase; this interaction might play a role in virus intracellular transport during entry. Part of a complex composed of the core-capsid bridging protein, the endosome lysis protein VI and the hexon-linking protein VIII; these interactions bridge the virus core to the capsid. Interacts with peripentonal hexons; this interaction stabilizes the capsid by gluing two peripentonal hexons together and joining them with an adjacent group-of-nine hexon. As to quaternary structure, heterodimer with the viral protease; disulfide-linked. Interacts with the viral protease. Post-translationally, ubiquitinated by Nedd4 following partial capsid disassembly; which might play a role in intracellular virus movement during entry. In terms of processing, contains the major nuclear import and export signals. Proteolytically removed during virion maturation. The processing of the C-terminus turns the precursor into a mature viral structural protein and abrogates its ability to promote hexon import and act as a potential chaperone protein.

Its subcellular location is the host nucleus. The protein resides in the host cytoplasm. The protein localises to the virion. In terms of biological role, during virus assembly, promotes hexon trimers nuclear import through nuclear pore complexes via an importin alpha/beta-dependent mechanism. By analogy to herpesviruses capsid assembly, might act as a chaperone to promote the formation of the icosahedral capsid. Functionally, structural component of the virion that provides increased stability to the particle shell through its interaction with the core-capsid bridging protein and the hexon-linking protein VIII. Fibers shedding during virus entry into host cell allows the endosome lysis protein to be exposed as a membrane-lytic peptide. Exhibits pH-independent membrane fragmentation activity and probably mediates viral rapid escape from host endosome via organellar membrane lysis. It is not clear if it then remains partially associated with the capsid and involved in the intracellular microtubule-dependent transport of capsid to the nucleus, or if it is lost during endosomal penetration. Cofactor that activates the viral protease. Binds to viral protease in a 1:1 ratio. This is Pre-protein VI from Human adenovirus A serotype 12 (HAdV-12).